The chain runs to 105 residues: 5-hydroxymethyl-dUMP N-hydrolase (105 aa).

5-hydroxymethyl-dUMP is bound by residues glycine 6, isoleucine 8, serine 42, glycine 44, glutamate 48, and serine 72.

The protein belongs to the 2'-deoxynucleoside 5'-phosphate N-hydrolase 1 family. As to quaternary structure, monomer and homodimer.

Its subcellular location is the cytoplasm. It is found in the nucleus. The enzyme catalyses 5-hydroxymethyl-dUMP + H2O = 5-hydroxymethyluracil + 2-deoxy-D-ribose 5-phosphate. Part of a nucleotide salvage pathway that eliminates epigenetically modified 5-hydroxymethyl-dCMP (hmdCMP) in a two-step process entailing deamination to cytotoxic 5-hydroxymethyl-dUMP (hmdUMP), followed by its hydrolysis into 5-hydroxymethyluracil (hmU) and 2-deoxy-D-ribose 5-phosphate (deoxyribosephosphate). Catalyzes the second step in that pathway, the hydrolysis of the N-glycosidic bond in hmdUMP, degrading this cytotoxic nucleotide to avoid its genomic integration. The chain is 5-hydroxymethyl-dUMP N-hydrolase from Branchiostoma floridae (Florida lancelet).